Here is a 403-residue protein sequence, read N- to C-terminus: Prostaglandin D2 receptor 2 (403 aa).

Residues 1–34 (MANITLKPLCPLLEEMVQLPNHSNSSLRYIDHVS) are Extracellular-facing. N-linked (GlcNAc...) asparagine glycans are attached at residues asparagine 3, asparagine 21, and asparagine 24. Residues 35-55 (VLLHGLASLLGLVENGLILFV) form a helical membrane-spanning segment. Residues 56–71 (VGCRMRQTVVTTWVLH) lie on the Cytoplasmic side of the membrane. A helical transmembrane segment spans residues 72-92 (LALSDLLAAASLPFFTYFLAV). At 93 to 104 (GHSWELGTTFCK) the chain is on the extracellular side. Residues cysteine 103 and cysteine 198 are joined by a disulfide bond. Residues 105–125 (LHSSVFFLNMFASGFLLSAIS) form a helical membrane-spanning segment. Topologically, residues 126–147 (LDRCLQVVRPVWAQNHRTVAAA) are cytoplasmic. A helical membrane pass occupies residues 148-168 (HRVCLMLWALAVLNTVPYFVF). The Extracellular segment spans residues 169-209 (RDTIPRRDGRIMCYYNMLLLNPGSDRDTTCDYRQKALAVSK). The chain crosses the membrane as a helical span at residues 210-230 (FLLAFMVPLAIIASSHVAVSL). Residues 231-245 (QLHHRGRQRTGRFVR) are Cytoplasmic-facing. The helical transmembrane segment at 246–266 (LVAAIVVAFILCWGPYHIFSL) threads the bilayer. The Extracellular segment spans residues 267-284 (LEARAHSVTTLRQLASRG). A helical membrane pass occupies residues 285–305 (LPFVTSLAFFNSVVNPLLYVL). The Cytoplasmic segment spans residues 306 to 403 (TCPDMLHKLR…KQGSLSCTLD (98 aa)). Positions 329-332 (DSDL) match the Involved in the recycling of CRTH2 motif. Phosphoserine is present on serine 330. 2 disordered regions span residues 332–353 (LSTG…STTT) and 384–403 (PRRV…CTLD). The segment covering 338 to 348 (KRCRRRHRRRA) has biased composition (basic residues). The residue at position 349 (serine 349) is a Phosphoserine. Residues 393–403 (EKQGSLSCTLD) are compositionally biased toward polar residues.

This sequence belongs to the G-protein coupled receptor 1 family. Phosphorylated.

Its subcellular location is the cell membrane. In terms of biological role, receptor for prostaglandin D2 (PGD2). Coupled to the G(i)-protein. Receptor activation may result in pertussis toxin-sensitive decreases in cAMP levels and Ca(2+) mobilization. PI3K signaling is also implicated in mediating PTGDR2 effects. PGD2 induced receptor internalization. CRTH2 internalization can be regulated by diverse kinases such as, PKC, PKA, GRK2, GPRK5/GRK5 and GRK6. Receptor activation is responsible, at least in part, in immune regulation and allergic/inflammation responses. This chain is Prostaglandin D2 receptor 2 (Ptgdr2), found in Rattus norvegicus (Rat).